Consider the following 265-residue polypeptide: Sulfur carrier protein FdhD (265 aa).

Catalysis depends on Cys107, which acts as the Cysteine persulfide intermediate.

The protein belongs to the FdhD family.

The protein resides in the cytoplasm. Required for formate dehydrogenase (FDH) activity. Acts as a sulfur carrier protein that transfers sulfur from IscS to the molybdenum cofactor prior to its insertion into FDH. The sequence is that of Sulfur carrier protein FdhD from Staphylococcus aureus (strain bovine RF122 / ET3-1).